Consider the following 98-residue polypeptide: Large ribosomal subunit protein uL23 (98 aa).

This sequence belongs to the universal ribosomal protein uL23 family. Part of the 50S ribosomal subunit. Contacts protein L29, and trigger factor when it is bound to the ribosome.

Its function is as follows. One of the early assembly proteins it binds 23S rRNA. One of the proteins that surrounds the polypeptide exit tunnel on the outside of the ribosome. Forms the main docking site for trigger factor binding to the ribosome. In Borrelia garinii subsp. bavariensis (strain ATCC BAA-2496 / DSM 23469 / PBi) (Borreliella bavariensis), this protein is Large ribosomal subunit protein uL23.